A 421-amino-acid polypeptide reads, in one-letter code: Nucleoprotein (421 aa).

The span at 1 to 11 (MSDNGPQSQRS) shows a compositional bias: polar residues. Disordered regions lie at residues 1–50 (MSDN…NNTA) and 63–82 (ELRFPRGQGVPINTNSGKDD). The segment at 41–186 (RPQGLPNNTA…RGGSQSSSRS (146 aa)) is RNA-binding. The CoV N NTD domain occupies 48-175 (NTASWFTALT…TLPKGFYAEG (128 aa)). RNA contacts are provided by Arg92, Arg107, and Arg149. Disordered stretches follow at residues 168–212 (PKGF…RLAS), 233–271 (KVSGKGQQQPGQTVTKKSAAEASKKPRQKRTATKQYNVT), and 361–421 (KTFP…STQA). At Ser176 the chain carries Phosphoserine; by host. The span at 179 to 212 (GSQSSSRSSSRSRGNSRNSTPGSSRGSSPARLAS) shows a compositional bias: low complexity. Polar residues predominate over residues 237–248 (KGQQQPGQTVTK). Residues 247-364 (TKKSAAEASK…KHIDAYKTFP (118 aa)) form the CoV N CTD domain. A dimerization region spans residues 258 to 361 (PRQKRTATKQ…LLNKHIDAYK (104 aa)). Residues 367–378 (EPKKDKKKKTDE) show a composition bias toward basic and acidic residues. A compositionally biased stretch (polar residues) spans 405 to 421 (RQLQHSMSGASADSTQA).

This sequence belongs to the betacoronavirus nucleocapsid protein family. Homooligomer. Both monomeric and oligomeric forms interact with RNA. Interacts with protein M. Interacts with NSP3; this interaction serves to tether the genome to the newly translated replicase-transcriptase complex at a very early stage of infection. In terms of processing, ADP-ribosylated. The ADP-ribosylation is retained in the virion during infection. Phosphorylated on serine and threonine residues.

Its subcellular location is the virion. It localises to the host endoplasmic reticulum-Golgi intermediate compartment. The protein localises to the host Golgi apparatus. Packages the positive strand viral genome RNA into a helical ribonucleocapsid (RNP) and plays a fundamental role during virion assembly through its interactions with the viral genome and membrane protein M. Plays an important role in enhancing the efficiency of subgenomic viral RNA transcription as well as viral replication. The polypeptide is Nucleoprotein (Rhinolophus sinicus (Chinese rufous horseshoe bat)).